The sequence spans 186 residues: Ribosome-recycling factor (186 aa).

The protein belongs to the RRF family.

The protein resides in the cytoplasm. Its function is as follows. Responsible for the release of ribosomes from messenger RNA at the termination of protein biosynthesis. May increase the efficiency of translation by recycling ribosomes from one round of translation to another. The sequence is that of Ribosome-recycling factor from Rickettsia africae (strain ESF-5).